The sequence spans 328 residues: Malate dehydrogenase (328 aa).

Residue 12–18 (GAAGQIG) coordinates NAD(+). Residues arginine 95 and arginine 101 each coordinate substrate. NAD(+) is bound by residues asparagine 108, glutamine 115, and 132-134 (VGN). Residues asparagine 134 and arginine 165 each contribute to the substrate site. Histidine 190 acts as the Proton acceptor in catalysis.

The protein belongs to the LDH/MDH superfamily. MDH type 2 family.

It catalyses the reaction (S)-malate + NAD(+) = oxaloacetate + NADH + H(+). Its function is as follows. Catalyzes the reversible oxidation of malate to oxaloacetate. This is Malate dehydrogenase from Variovorax paradoxus (strain S110).